Reading from the N-terminus, the 513-residue chain is 2-isopropylmalate synthase (513 aa).

Residues 4 to 266 (IEFFDTSLRD…KSPLVLAETM (263 aa)) form the Pyruvate carboxyltransferase domain. D13, H201, H203, and N237 together coordinate Mn(2+). The interval 390–513 (ILNNVQIDGH…VEQISAHDGI (124 aa)) is regulatory domain.

Belongs to the alpha-IPM synthase/homocitrate synthase family. LeuA type 1 subfamily. In terms of assembly, homodimer. It depends on Mn(2+) as a cofactor.

The protein resides in the cytoplasm. The enzyme catalyses 3-methyl-2-oxobutanoate + acetyl-CoA + H2O = (2S)-2-isopropylmalate + CoA + H(+). The protein operates within amino-acid biosynthesis; L-leucine biosynthesis; L-leucine from 3-methyl-2-oxobutanoate: step 1/4. Catalyzes the condensation of the acetyl group of acetyl-CoA with 3-methyl-2-oxobutanoate (2-ketoisovalerate) to form 3-carboxy-3-hydroxy-4-methylpentanoate (2-isopropylmalate). This chain is 2-isopropylmalate synthase, found in Lactococcus lactis subsp. cremoris (strain SK11).